Reading from the N-terminus, the 925-residue chain is Nuclear factor of activated T-cells, cytoplasmic 2 (925 aa).

Positions 1–95 (MNAPERQPQP…FGEPDRVGPQ (95 aa)) are disordered. A Phosphoserine modification is found at Ser-23. The 9aaTAD signature appears at 26 to 34 (DELDFSILF). Ser-99, Ser-107, and Ser-110 each carry phosphoserine. Residues 111–116 (PRIEIT) form a calcineurin-binding region. Residues 119–199 (HELIQAVGPL…CVSPNNGGPD (81 aa)) form a transactivation domain A (TAD-A) region. Phosphoserine is present on residues Ser-148, Ser-168, Ser-171, Ser-172, Ser-174, Ser-175, Ser-177, and Ser-180. The required for cytoplasmic retention of the phosphorylated form stretch occupies residues 161-175 (YREPLCLSPASSGSS). A run of 2 repeats spans residues 184–200 (SPYTSPCVSPNNGGPDD) and 213–229 (SPRTSPIMSPRTSLAED). The interval 184–286 (SPYTSPCVSP…PQPSSHVAPQ (103 aa)) is 3 X approximate SP repeats. Residues 195–297 (NGGPDDLCPQ…HGSPAGYPPV (103 aa)) are disordered. Residues Ser-213, Ser-217, Ser-221, Ser-236, and Ser-243 each carry the phosphoserine modification. Positions 214 to 224 (PRTSPIMSPRT) are enriched in polar residues. The Nuclear localization signal motif lies at 251 to 253 (KRR). 8 positions are modified to phosphoserine: Ser-255, Ser-268, Ser-274, Ser-276, Ser-280, Ser-326, Ser-330, and Ser-363. Low complexity predominate over residues 264 to 281 (PPGASPQRSRSPSPQPSS). The stretch at 272–286 (SRSPSPQPSSHVAPQ) is one 3; approximate repeat. Residues 392–574 (ASLPPLEWPL…NPIECSQRSA (183 aa)) enclose the RHD domain. The DNA-binding element occupies 421–428 (RAHYETEG). A Nuclear localization signal motif is present at residues 664-666 (KRK). Phosphoserine occurs at positions 755, 757, 759, 856, and 859. A disordered region spans residues 839-894 (PGTTRPGPPPVSQGQRLSPGSYPTVIQQQNATSQRAAKNGPPVSDQKEVLPAGVTI). The segment covering 862–874 (TVIQQQNATSQRA) has biased composition (polar residues). The Nuclear export signal motif lies at 904–913 (YLDDVNEIIR).

In terms of assembly, member of the multicomponent NFATC transcription complex that consists of at least two components, a pre-existing cytoplasmic component NFATC2 and an inducible nuclear component NFATC1. Other members such as NFATC4, NFATC3 or members of the activating protein-1 family, MAF, GATA4 and Cbp/p300 can also bind the complex. The phosphorylated form specifically interacts with XPO1; which mediates nuclear export. NFATC proteins bind to DNA as monomers. Interacts with NFATC2IP. Interacts with FOXP3. Interacts with TBX21 ('Thr-303' phosphorylated form). Interacts with KAT2A. Interacts with HOMER2 and HOMER3; this interaction competes with calcineurin/PPP3CA-binding and hence prevents NFATC2 dephosphorylation and activation. Interacts with protein phosphatase PPP3CA/calcineurin A. Interacts with AKAP5 (via leucine zipper domain); this is required for NFATC2/NFAT1 recruitment to CRAC channels. In resting cells, phosphorylated by NFATC-kinase on at least 18 sites in the 99-363 region. Upon cell stimulation, all these sites except Ser-243 are dephosphorylated by calcineurin. Dephosphorylation induces a conformational change that simultaneously exposes an NLS and masks an NES, which results in nuclear localization. Simultaneously, Ser-53 or Ser-56 is phosphorylated; which is required for full transcriptional activity. In terms of processing, ubiquitinated in endothelial cells by RNF213 downstream of the non-canonical Wnt signaling pathway, leading to its degradation by the proteasome. Expressed in thymus, spleen, heart, testis, brain, placenta, muscle and pancreas. Isoform 1 is highly expressed in the small intestine, heart, testis, prostate, thymus, placenta and thyroid. Isoform 3 is highly expressed in stomach, uterus, placenta, trachea and thyroid.

The protein resides in the cytoplasm. It localises to the nucleus. In terms of biological role, plays a role in the inducible expression of cytokine genes in T-cells, especially in the induction of the IL-2, IL-3, IL-4, TNF-alpha or GM-CSF. Promotes invasive migration through the activation of GPC6 expression and WNT5A signaling pathway. Is involved in the negative regulation of chondrogenesis. Recruited by AKAP5 to ORAI1 pore-forming subunit of CRAC channels in Ca(2+) signaling microdomains where store-operated Ca(2+) influx is coupled to calmodulin and calcineurin signaling and activation of NFAT-dependent transcriptional responses. The protein is Nuclear factor of activated T-cells, cytoplasmic 2 (NFATC2) of Homo sapiens (Human).